The primary structure comprises 340 residues: Alcohol dehydrogenase (340 aa).

The Zn(2+) site is built by cysteine 37, histidine 58, cysteine 89, cysteine 92, cysteine 95, cysteine 103, and cysteine 145.

Belongs to the zinc-containing alcohol dehydrogenase family. Requires Zn(2+) as cofactor.

The enzyme catalyses a primary alcohol + NAD(+) = an aldehyde + NADH + H(+). It catalyses the reaction a secondary alcohol + NAD(+) = a ketone + NADH + H(+). The chain is Alcohol dehydrogenase (adh) from Staphylococcus epidermidis (strain ATCC 35984 / DSM 28319 / BCRC 17069 / CCUG 31568 / BM 3577 / RP62A).